Reading from the N-terminus, the 126-residue chain is Large ribosomal subunit protein eL8 (126 aa).

The protein belongs to the eukaryotic ribosomal protein eL8 family. In terms of assembly, part of the 50S ribosomal subunit. Probably part of the RNase P complex.

It is found in the cytoplasm. Multifunctional RNA-binding protein that recognizes the K-turn motif in ribosomal RNA, the RNA component of RNase P, box H/ACA, box C/D and box C'/D' sRNAs. In Cenarchaeum symbiosum (strain A), this protein is Large ribosomal subunit protein eL8.